The sequence spans 139 residues: Two-component response regulator 24 (139 aa).

The region spanning Thr-19–Asn-134 is the Response regulatory domain. 4-aspartylphosphate is present on Asp-69.

The protein belongs to the ARR family. Type-A subfamily. In terms of processing, two-component system major event consists of a His-to-Asp phosphorelay between a sensor histidine kinase (HK) and a response regulator (RR). In plants, the His-to-Asp phosphorelay involves an additional intermediate named Histidine-containing phosphotransfer protein (HPt). This multistep phosphorelay consists of a His-Asp-His-Asp sequential transfer of a phosphate group between first a His and an Asp of the HK protein, followed by the transfer to a conserved His of the HPt protein and finally the transfer to an Asp in the receiver domain of the RR protein. As to expression, mostly expressed in flowers and siliques, primarily restricted to pollen grains.

The protein localises to the nucleus. Functionally, functions as a response regulator involved in His-to-Asp phosphorelay signal transduction system. Phosphorylation of the Asp residue in the receiver domain activates the ability of the protein to promote the transcription of target genes. Type-A response regulators seem to act as negative regulators of the cytokinin signaling. The sequence is that of Two-component response regulator 24 from Arabidopsis thaliana (Mouse-ear cress).